A 139-amino-acid polypeptide reads, in one-letter code: Large ribosomal subunit protein uL16 (139 aa).

This sequence belongs to the universal ribosomal protein uL16 family. As to quaternary structure, part of the 50S ribosomal subunit.

Binds 23S rRNA and is also seen to make contacts with the A and possibly P site tRNAs. The polypeptide is Large ribosomal subunit protein uL16 (Chlorobium luteolum (strain DSM 273 / BCRC 81028 / 2530) (Pelodictyon luteolum)).